A 471-amino-acid polypeptide reads, in one-letter code: Argininosuccinate lyase (471 aa).

The protein belongs to the lyase 1 family. Argininosuccinate lyase subfamily.

The protein localises to the cytoplasm. It catalyses the reaction 2-(N(omega)-L-arginino)succinate = fumarate + L-arginine. The protein operates within amino-acid biosynthesis; L-arginine biosynthesis; L-arginine from L-ornithine and carbamoyl phosphate: step 3/3. The protein is Argininosuccinate lyase of Parasynechococcus marenigrum (strain WH8102).